Here is a 374-residue protein sequence, read N- to C-terminus: Translocating chain-associated membrane protein 1 (374 aa).

Topologically, residues methionine 1–cysteine 29 are cytoplasmic. A helical transmembrane segment spans residues valine 30–phenylalanine 50. The Lumenal portion of the chain corresponds to valine 51–glycine 76. Asparagine 56 is a glycosylation site (N-linked (GlcNAc...) asparagine). The chain crosses the membrane as a helical span at residues isoleucine 77 to isoleucine 97. Topologically, residues glutamine 98–glutamate 121 are cytoplasmic. The region spanning serine 117–histidine 326 is the TLC domain. A helical transmembrane segment spans residues serine 122–serine 142. Residues glutamate 143–asparagine 159 are Lumenal-facing. The helical transmembrane segment at leucine 160–phenylalanine 180 threads the bilayer. Residues proline 181–aspartate 192 lie on the Cytoplasmic side of the membrane. Residues isoleucine 193–leucine 213 traverse the membrane as a helical segment. A topological domain (lumenal) is located at residue asparagine 214. A helical membrane pass occupies residues leucine 215–isoleucine 235. The Cytoplasmic portion of the chain corresponds to serine 236–serine 251. The helical transmembrane segment at leucine 252–valine 272 threads the bilayer. Topologically, residues glycine 273–arginine 297 are lumenal. The chain crosses the membrane as a helical span at residues isoleucine 298–phenylalanine 318. Topologically, residues glutamine 319 to serine 374 are cytoplasmic. Over residues valine 334–lysine 347 the composition is skewed to basic residues. The segment at valine 334 to serine 374 is disordered. Over residues asparagine 352–alanine 363 the composition is skewed to polar residues. Residue serine 365 is modified to Phosphoserine.

The protein belongs to the TRAM family. Interacts with SEC61B. May interact with Derlin-1/DERL1. Post-translationally, N-glycosylated.

The protein localises to the endoplasmic reticulum membrane. In terms of biological role, involved in the translocation of nascent protein chains into or through the endoplasmic reticulum (ER) membrane by facilitating the proper chain positioning at the SEC61 channel. Regulates the exposure of nascent secretory protein chain to the cytosol during translocation into the ER. May affect the phospholipid bilayer in the vicinity of the lateral gate of the SEC61 channel, thereby facilitating ER protein transport. Intimately associates with transmembrane (TM) domain of nascent membrane proteins during the entire integration process into the ER membrane. Associates with the second TM domain of G-protein-coupled receptor opsin/OPSD nascent chain in the ER membrane, which may facilitate its integration into the membrane. Under conditions of ER stress, participates in the disposal of misfolded ER membrane proteins during the unfolded protein response (UPR), an integrated stress response (ISR) pathway, by selectively retrotranslocating misfolded ER-membrane proteins from the ER into the cytosol where they are ubiquitinated and degraded by the proteasome. The chain is Translocating chain-associated membrane protein 1 (TRAM1) from Pongo abelii (Sumatran orangutan).